Consider the following 356-residue polypeptide: Phenylalanine--tRNA ligase alpha subunit (356 aa).

Residue Glu-258 participates in Mg(2+) binding.

Belongs to the class-II aminoacyl-tRNA synthetase family. Phe-tRNA synthetase alpha subunit type 1 subfamily. In terms of assembly, tetramer of two alpha and two beta subunits. It depends on Mg(2+) as a cofactor.

It is found in the cytoplasm. The enzyme catalyses tRNA(Phe) + L-phenylalanine + ATP = L-phenylalanyl-tRNA(Phe) + AMP + diphosphate + H(+). The sequence is that of Phenylalanine--tRNA ligase alpha subunit from Macrococcus caseolyticus (strain JCSC5402) (Macrococcoides caseolyticum).